A 100-amino-acid chain; its full sequence is Aspartyl/glutamyl-tRNA(Asn/Gln) amidotransferase subunit C (100 aa).

It belongs to the GatC family. As to quaternary structure, heterotrimer of A, B and C subunits.

It catalyses the reaction L-glutamyl-tRNA(Gln) + L-glutamine + ATP + H2O = L-glutaminyl-tRNA(Gln) + L-glutamate + ADP + phosphate + H(+). It carries out the reaction L-aspartyl-tRNA(Asn) + L-glutamine + ATP + H2O = L-asparaginyl-tRNA(Asn) + L-glutamate + ADP + phosphate + 2 H(+). Allows the formation of correctly charged Asn-tRNA(Asn) or Gln-tRNA(Gln) through the transamidation of misacylated Asp-tRNA(Asn) or Glu-tRNA(Gln) in organisms which lack either or both of asparaginyl-tRNA or glutaminyl-tRNA synthetases. The reaction takes place in the presence of glutamine and ATP through an activated phospho-Asp-tRNA(Asn) or phospho-Glu-tRNA(Gln). This is Aspartyl/glutamyl-tRNA(Asn/Gln) amidotransferase subunit C from Rickettsia felis (strain ATCC VR-1525 / URRWXCal2) (Rickettsia azadi).